A 393-amino-acid chain; its full sequence is Chalcone synthase 3 (393 aa).

Cysteine 166 is an active-site residue.

Belongs to the thiolase-like superfamily. Chalcone/stilbene synthases family.

It carries out the reaction (E)-4-coumaroyl-CoA + 3 malonyl-CoA + 3 H(+) = 2',4,4',6'-tetrahydroxychalcone + 3 CO2 + 4 CoA. It participates in secondary metabolite biosynthesis; flavonoid biosynthesis. The primary product of this enzyme is 4,2',4',6'-tetrahydroxychalcone (also termed naringenin-chalcone or chalcone) which can under specific conditions spontaneously isomerize into naringenin. This chain is Chalcone synthase 3 (CHS3), found in Ruta graveolens (Common rue).